Reading from the N-terminus, the 413-residue chain is Hemolin (413 aa).

The N-terminal stretch at 1–19 (MAFKSIAVLSACIIVGSAL) is a signal peptide. Ig-like C2-type domains are found at residues 25-112 (PVLK…RVIS), 122-211 (PAKT…EEVV), 233-322 (PQYV…LKLT), and 327-413 (PKYE…VQVN). 4 disulfides stabilise this stretch: Cys-46–Cys-97, Cys-140–Cys-199, Cys-252–Cys-305, and Cys-349–Cys-395. N-linked (GlcNAc...) asparagine glycosylation is present at Asn-283.

Belongs to the hemolin family. In terms of tissue distribution, hemolymph.

The protein localises to the secreted. Its subcellular location is the extracellular space. Its function is as follows. Insect-immune protein. Forms a protein complex at the bacterial surface. Can inhibit hemocyte aggregation. The polypeptide is Hemolin (Hyalophora cecropia (Cecropia moth)).